The primary structure comprises 919 residues: UPF0182 protein Tery_4385 (919 aa).

A run of 7 helical transmembrane segments spans residues 6 to 26 (YIII…RTLV), 52 to 72 (IFLW…NYWI), 96 to 116 (IFVK…AATA), 160 to 180 (WLFT…ALKG), 198 to 218 (THIS…FWFE), 243 to 263 (FAYW…VLSV), and 268 to 288 (IIWP…FNVL).

This sequence belongs to the UPF0182 family.

The protein localises to the cell membrane. The polypeptide is UPF0182 protein Tery_4385 (Trichodesmium erythraeum (strain IMS101)).